The primary structure comprises 279 residues: Pantothenate synthetase (279 aa).

30 to 37 contributes to the ATP binding site; that stretch reads MGALHAGH. Catalysis depends on His37, which acts as the Proton donor. Gln61 contributes to the (R)-pantoate binding site. Beta-alanine is bound at residue Gln61. Position 147 to 150 (147 to 150) interacts with ATP; sequence GEKD. A (R)-pantoate-binding site is contributed by Gln153. Residues Ala176 and 184 to 187 each bind ATP; that span reads LSSR.

The protein belongs to the pantothenate synthetase family. Homodimer.

The protein resides in the cytoplasm. It carries out the reaction (R)-pantoate + beta-alanine + ATP = (R)-pantothenate + AMP + diphosphate + H(+). It functions in the pathway cofactor biosynthesis; (R)-pantothenate biosynthesis; (R)-pantothenate from (R)-pantoate and beta-alanine: step 1/1. Catalyzes the condensation of pantoate with beta-alanine in an ATP-dependent reaction via a pantoyl-adenylate intermediate. This Sphingopyxis alaskensis (strain DSM 13593 / LMG 18877 / RB2256) (Sphingomonas alaskensis) protein is Pantothenate synthetase.